A 297-amino-acid polypeptide reads, in one-letter code: NADPH-dependent 1-acyldihydroxyacetone phosphate reductase (297 aa).

The GXSXG motif lies at 16-20; it reads GASGG. Serine 18 functions as the Nucleophile; for lipase activity in the catalytic mechanism. Residues isoleucine 21, aspartate 64, asparagine 93, arginine 126, tyrosine 157, lysine 161, valine 190, and threonine 192 each contribute to the NADP(+) site. The active-site Proton acceptor is tyrosine 157. Residue lysine 161 is the Lowers pKa of active site Tyr of the active site.

It belongs to the short-chain dehydrogenases/reductases (SDR) family.

It localises to the lipid droplet. Its subcellular location is the mitochondrion outer membrane. It is found in the endoplasmic reticulum. It carries out the reaction a 1-acylglycerone 3-phosphate + NADPH + H(+) = a 1-acyl-sn-glycero-3-phosphate + NADP(+). The catalysed reaction is 1-hexadecanoyl-sn-glycero-3-phosphate + NADP(+) = 1-hexadecanoylglycerone 3-phosphate + NADPH + H(+). The enzyme catalyses a triacylglycerol + H2O = a diacylglycerol + a fatty acid + H(+). It catalyses the reaction 1,2,3-tri-(9Z-octadecenoyl)-glycerol + H2O = di-(9Z)-octadecenoylglycerol + (9Z)-octadecenoate + H(+). Its activity is regulated as follows. Inhibited by divalent cations and N-ethylmaleimide. Activity is reduced under anaerobic growth conditions. Functionally, can convert acyl and alkyl dihydroxyacetone-phosphate (DHAP) into glycerolipids and ether lipids, respectively. Required for the biosynthesis of phosphatidic acid via the DHAP pathway, where it reduces 1-acyl DHAP to lysophosphatidic acid (LPA). Also has triacylglycerol (TAG) lipase activity. Involved in the mobilization of the non-polar storage lipids triacylglycerols (TAGs) from lipid particles by hydrolysis of TAGs. Required for spore germination. Plays a role in cell wall biogenesis, but this effect may be indirect by affecting the activities of cell wall synthesis enzymes. Lipolysis of TAG by AYR1 is essential for starvation-induced autophagy. Forms an NADPH-regulated cation-selective channel in the mitochondrial outer membrane. The protein is NADPH-dependent 1-acyldihydroxyacetone phosphate reductase of Saccharomyces cerevisiae (strain ATCC 204508 / S288c) (Baker's yeast).